The following is a 630-amino-acid chain: Transposase B from transposon Tn554 (630 aa).

One can recognise a Core-binding (CB) domain in the interval 216 to 302; sequence TYFKQLVKRY…ILEGLFSTLL (87 aa). Residues 326–513 enclose the Tyr recombinase domain; it reads AKPRFIDEFV…FDETLKNEFT (188 aa). Residues Arg-363, Lys-391, His-465, Arg-468, and His-491 contribute to the active site. The active-site O-(3'-phospho-DNA)-tyrosine intermediate is Tyr-500.

Belongs to the 'phage' integrase family.

Functionally, one of three proteins encoded by transposon Tn554 required for its transposition. The polypeptide is Transposase B from transposon Tn554 (tnpB1) (Staphylococcus aureus (strain Mu50 / ATCC 700699)).